A 237-amino-acid polypeptide reads, in one-letter code: Demethylmenaquinone methyltransferase (237 aa).

S-adenosyl-L-methionine is bound by residues Thr-58, Asp-79, and 106 to 107 (NA).

The protein belongs to the class I-like SAM-binding methyltransferase superfamily. MenG/UbiE family.

The enzyme catalyses a 2-demethylmenaquinol + S-adenosyl-L-methionine = a menaquinol + S-adenosyl-L-homocysteine + H(+). Its pathway is quinol/quinone metabolism; menaquinone biosynthesis; menaquinol from 1,4-dihydroxy-2-naphthoate: step 2/2. Methyltransferase required for the conversion of demethylmenaquinol (DMKH2) to menaquinol (MKH2). The sequence is that of Demethylmenaquinone methyltransferase from Listeria innocua serovar 6a (strain ATCC BAA-680 / CLIP 11262).